We begin with the raw amino-acid sequence, 466 residues long: UDP-N-acetylmuramate--L-alanine ligase (466 aa).

ATP is bound at residue 117 to 123 (GTHGKTT).

This sequence belongs to the MurCDEF family.

The protein localises to the cytoplasm. It carries out the reaction UDP-N-acetyl-alpha-D-muramate + L-alanine + ATP = UDP-N-acetyl-alpha-D-muramoyl-L-alanine + ADP + phosphate + H(+). It participates in cell wall biogenesis; peptidoglycan biosynthesis. Functionally, cell wall formation. The polypeptide is UDP-N-acetylmuramate--L-alanine ligase (Streptomyces griseus subsp. griseus (strain JCM 4626 / CBS 651.72 / NBRC 13350 / KCC S-0626 / ISP 5235)).